The following is a 375-amino-acid chain: Probable disease resistance protein At1g52660 (375 aa).

Residues 158–372 (ENTGIIGLYG…LSNSPPNFSG (215 aa)) enclose the NB-ARC domain. 167 to 174 (GVEGVGKT) lines the ATP pocket.

Its function is as follows. Possible disease resistance protein. The polypeptide is Probable disease resistance protein At1g52660 (Arabidopsis thaliana (Mouse-ear cress)).